Consider the following 117-residue polypeptide: Conotoxin vil14.3 (117 aa).

Positions 1-22 are cleaved as a signal peptide; sequence MGFRVLVLVVMATTSALPFTFS. Residues 23 to 90 constitute a propeptide that is removed on maturation; it reads EEPGRSPFRP…FAELSVGQRR (68 aa). A disordered region spans residues 53–79; that stretch reads RADGQPPDMRQPEMRRPEMRRPEVRQP. The span at 62–79 shows a compositional bias: basic and acidic residues; sequence RQPEMRRPEMRRPEVRQP. 2 disulfides stabilise this stretch: C96–C116 and C100–C112.

The protein belongs to the conotoxin R superfamily. Expressed by the venom duct.

The protein resides in the secreted. This is Conotoxin vil14.3 from Conus villepinii (Villepin's cone).